Here is a 156-residue protein sequence, read N- to C-terminus: Transcription antitermination protein NusB (156 aa).

Belongs to the NusB family.

Involved in transcription antitermination. Required for transcription of ribosomal RNA (rRNA) genes. Binds specifically to the boxA antiterminator sequence of the ribosomal RNA (rrn) operons. The sequence is that of Transcription antitermination protein NusB from Xanthomonas oryzae pv. oryzae (strain MAFF 311018).